Reading from the N-terminus, the 464-residue chain is UDP-N-acetylmuramoylalanine--D-glutamate ligase (464 aa).

Position 112–118 (112–118 (GTDGKTT)) interacts with ATP.

The protein belongs to the MurCDEF family.

The protein localises to the cytoplasm. The enzyme catalyses UDP-N-acetyl-alpha-D-muramoyl-L-alanine + D-glutamate + ATP = UDP-N-acetyl-alpha-D-muramoyl-L-alanyl-D-glutamate + ADP + phosphate + H(+). It participates in cell wall biogenesis; peptidoglycan biosynthesis. Cell wall formation. Catalyzes the addition of glutamate to the nucleotide precursor UDP-N-acetylmuramoyl-L-alanine (UMA). The chain is UDP-N-acetylmuramoylalanine--D-glutamate ligase from Chlorobium phaeobacteroides (strain DSM 266 / SMG 266 / 2430).